Here is a 218-residue protein sequence, read N- to C-terminus: Probable transaldolase (218 aa).

Catalysis depends on K83, which acts as the Schiff-base intermediate with substrate.

Belongs to the transaldolase family. Type 3B subfamily.

Its subcellular location is the cytoplasm. The catalysed reaction is D-sedoheptulose 7-phosphate + D-glyceraldehyde 3-phosphate = D-erythrose 4-phosphate + beta-D-fructose 6-phosphate. Its pathway is carbohydrate degradation; pentose phosphate pathway; D-glyceraldehyde 3-phosphate and beta-D-fructose 6-phosphate from D-ribose 5-phosphate and D-xylulose 5-phosphate (non-oxidative stage): step 2/3. Functionally, transaldolase is important for the balance of metabolites in the pentose-phosphate pathway. The sequence is that of Probable transaldolase from Thermotoga petrophila (strain ATCC BAA-488 / DSM 13995 / JCM 10881 / RKU-1).